The primary structure comprises 294 residues: Acetyl-coenzyme A carboxylase carboxyl transferase subunit beta (294 aa).

The region spanning 30–294 (IMTKCPECKK…PEAGGESDGE (265 aa)) is the CoA carboxyltransferase N-terminal domain. Residues Cys-34, Cys-37, Cys-53, and Cys-56 each coordinate Zn(2+). The C4-type zinc-finger motif lies at 34–56 (CPECKKIMYTKELQKNLMVCNYC).

Belongs to the AccD/PCCB family. As to quaternary structure, acetyl-CoA carboxylase is a heterohexamer composed of biotin carboxyl carrier protein (AccB), biotin carboxylase (AccC) and two subunits each of ACCase subunit alpha (AccA) and ACCase subunit beta (AccD). Zn(2+) serves as cofactor.

Its subcellular location is the cytoplasm. The catalysed reaction is N(6)-carboxybiotinyl-L-lysyl-[protein] + acetyl-CoA = N(6)-biotinyl-L-lysyl-[protein] + malonyl-CoA. It functions in the pathway lipid metabolism; malonyl-CoA biosynthesis; malonyl-CoA from acetyl-CoA: step 1/1. Its function is as follows. Component of the acetyl coenzyme A carboxylase (ACC) complex. Biotin carboxylase (BC) catalyzes the carboxylation of biotin on its carrier protein (BCCP) and then the CO(2) group is transferred by the transcarboxylase to acetyl-CoA to form malonyl-CoA. This is Acetyl-coenzyme A carboxylase carboxyl transferase subunit beta from Listeria innocua serovar 6a (strain ATCC BAA-680 / CLIP 11262).